The following is a 62-amino-acid chain: Paralithocin 1 (62 aa).

Positions 1-23 (MGPMKVLLVLLVVMVAAPHIADA) are cleaved as a signal peptide. Intrachain disulfides connect cysteine 29/cysteine 55, cysteine 33/cysteine 51, cysteine 37/cysteine 49, and cysteine 42/cysteine 52. Tyrosine 61 bears the Tyrosine amide; partial mark.

It belongs to the paralithocin family. The amidated form is probably the active form.

Has weak antibacterial activity, mainly against marine Gram-positive bacteria like C.maltaromaticum (MIC=200 uM), C.mobile (MIC=100 uM), C.divergens (MIC=200 uM) and C.funditum (MIC=200 uM) but also against C.glutamicum (MIC=50 uM). Has very little or no activity against Gram-negative bacteria. The sequence is that of Paralithocin 1 from Paralithodes camtschaticus (Red king crab).